Consider the following 396-residue polypeptide: Probable isocitrate dehydrogenase [NAD] gamma 2, mitochondrial (396 aa).

The transit peptide at 1–25 (MLAVTSCSMKTVLQYAVFLGHSREV) directs the protein to the mitochondrion. Citrate is bound at residue Thr-117. Substrate-binding residues include Arg-133, Arg-164, and Asp-251. Mn(2+) is bound at residue Asp-251. Residue Asn-321 participates in ADP binding.

The protein belongs to the isocitrate and isopropylmalate dehydrogenases family. Heterooligomer of subunits alpha (IDH3A), beta (IDH3B), and gamma (IDH3G) in the apparent ratio of 2:1:1. The heterodimer containing one IDH3A and one IDH3B subunit and the heterodimer containing one IDH3A and one IDH3G subunit assemble into a heterotetramer (which contains two subunits of IDH3A, one of IDH3B and one of IDH3G) and further into the heterooctamer. It depends on Mg(2+) as a cofactor. Requires Mn(2+) as cofactor.

The protein resides in the mitochondrion. Its activity is regulated as follows. The heterotetramer and the heterodimer composed of IDH3A and IDH3G subunits can be allosterically activated by citrate (CIT) or/and ADP, and the two activators can act independently or synergistically. The heterodimer composed of IDH3A and IDH3B subunits cannot be allosterically regulated and the allosteric regulation of the heterotetramer is through the IDH3G subunit and not the IDH3B subunit. The IDH3G subunit contains the allosteric site which consists of a CIT-binding site and an ADP-binding site, and the binding of CIT and ADP causes conformational changes at the allosteric site which are transmitted to the active site in the catalytic subunit (IDH3A) through a cascade of conformational changes at the heterodimer interface, leading to stabilization of the isocitrate-binding at the active site and thus activation of the enzyme. ATP can activate the heterotetramer and the heterodimer composed of IDH3A and IDH3G subunits at low concentrations but inhibits their activities at high concentrations, whereas ATP exhibits only inhibitory effect on the heterodimer composed of IDH3A and IDH3B subunits. Its function is as follows. Regulatory subunit which plays a role in the allosteric regulation of the enzyme catalyzing the decarboxylation of isocitrate (ICT) into alpha-ketoglutarate. The heterodimer composed of the alpha (IDH3A) and beta (IDH3B) subunits and the heterodimer composed of the alpha (IDH3A) and gamma (IDH3G) subunits, have considerable basal activity but the full activity of the heterotetramer (containing two subunits of IDH3A, one of IDH3B and one of IDH3G) requires the assembly and cooperative function of both heterodimers. In Mus musculus (Mouse), this protein is Probable isocitrate dehydrogenase [NAD] gamma 2, mitochondrial.